Consider the following 259-residue polypeptide: Hydroxyacylglutathione hydrolase (259 aa).

Zn(2+) is bound by residues His-56, His-58, Asp-60, His-61, His-112, Asp-133, and His-171.

This sequence belongs to the metallo-beta-lactamase superfamily. Glyoxalase II family. Monomer. It depends on Zn(2+) as a cofactor.

It carries out the reaction an S-(2-hydroxyacyl)glutathione + H2O = a 2-hydroxy carboxylate + glutathione + H(+). Its pathway is secondary metabolite metabolism; methylglyoxal degradation; (R)-lactate from methylglyoxal: step 2/2. Its function is as follows. Thiolesterase that catalyzes the hydrolysis of S-D-lactoyl-glutathione to form glutathione and D-lactic acid. The protein is Hydroxyacylglutathione hydrolase of Pseudomonas putida (strain ATCC 47054 / DSM 6125 / CFBP 8728 / NCIMB 11950 / KT2440).